Here is a 323-residue protein sequence, read N- to C-terminus: Annexin A3 (323 aa).

At alanine 2 the chain carries N-acetylalanine. Annexin repeat units follow at residues phenylalanine 18–threonine 89, alanine 90–aspartate 161, histidine 173–histidine 245, and asparagine 249–glycine 320. Lysine 177 is modified (N6-acetyllysine). Threonine 267 carries the phosphothreonine modification.

This sequence belongs to the annexin family.

Its function is as follows. Inhibitor of phospholipase A2, also possesses anti-coagulant properties. This chain is Annexin A3 (Anxa3), found in Mus musculus (Mouse).